The following is a 340-amino-acid chain: MSHHDGSKPYQPRRGPERPPPPAPADDAAAHVAPTVDHLAAVAAEAEAMARFEEEHRALGAEEEYEEEEDELEEEEEEMEEDEDAQHHEGVGGEVAVPMDAEAAAQLDPHGGMLAASGAVQPMASNQLTLSFQGEVYVFDSVSPDKVQAVLLLLGGRELNPGLGSGASSSAPYSKRLNFPHRVASLMRFREKRKERNFDKKIRYSVRKEVALRMQRNRGQFTSSKPKGDEATSELTASDGSPNWGSVEGRPPSAAECHHCGINAKATPMMRRGPDGPRTLCNACGLMWANKGMLRDLSKAPPTPIQVVASVNDGNGSAAAPTTEQEIPAPATVNGHESST.

The disordered stretch occupies residues 1-88 (MSHHDGSKPY…MEEDEDAQHH (88 aa)). The span at 25–47 (ADDAAAHVAPTVDHLAAVAAEAE) shows a compositional bias: low complexity. A compositionally biased stretch (basic and acidic residues) spans 48–60 (AMARFEEEHRALG). The span at 61–84 (AEEEYEEEEDELEEEEEEMEEDED) shows a compositional bias: acidic residues. Positions 121-156 (QPMASNQLTLSFQGEVYVFDSVSPDKVQAVLLLLGG) constitute a Tify domain. The CCT domain occupies 182-224 (RVASLMRFREKRKERNFDKKIRYSVRKEVALRMQRNRGQFTSS). The tract at residues 215–253 (QRNRGQFTSSKPKGDEATSELTASDGSPNWGSVEGRPPS) is disordered. Residues 233–244 (SELTASDGSPNW) show a composition bias toward polar residues. The GATA-type zinc finger occupies 257-284 (CHHCGINAKATPMMRRGPDGPRTLCNAC). Residues 313–325 (DGNGSAAAPTTEQ) are compositionally biased toward polar residues. The disordered stretch occupies residues 313–340 (DGNGSAAAPTTEQEIPAPATVNGHESST).

This sequence belongs to the type IV zinc-finger family. Class C subfamily.

It localises to the nucleus. Transcriptional activator that specifically binds 5'-GATA-3' or 5'-GAT-3' motifs within gene promoters. The chain is GATA transcription factor 20 from Oryza sativa subsp. japonica (Rice).